The following is a 222-amino-acid chain: Protein GrpE (222 aa).

2 disordered regions span residues 1–21 (MNDG…ENGQ) and 200–222 (KGGP…PEGA).

It belongs to the GrpE family. As to quaternary structure, homodimer.

Its subcellular location is the cytoplasm. Participates actively in the response to hyperosmotic and heat shock by preventing the aggregation of stress-denatured proteins, in association with DnaK and GrpE. It is the nucleotide exchange factor for DnaK and may function as a thermosensor. Unfolded proteins bind initially to DnaJ; upon interaction with the DnaJ-bound protein, DnaK hydrolyzes its bound ATP, resulting in the formation of a stable complex. GrpE releases ADP from DnaK; ATP binding to DnaK triggers the release of the substrate protein, thus completing the reaction cycle. Several rounds of ATP-dependent interactions between DnaJ, DnaK and GrpE are required for fully efficient folding. The polypeptide is Protein GrpE (Chelativorans sp. (strain BNC1)).